A 381-amino-acid chain; its full sequence is Erythronate-4-phosphate dehydrogenase (381 aa).

Substrate-binding residues include serine 45 and threonine 66. Positions 146 and 173 each coordinate NAD(+). The active site involves arginine 206. Aspartate 230 serves as a coordination point for NAD(+). Glutamate 235 is a catalytic residue. Histidine 252 functions as the Proton donor in the catalytic mechanism. Glycine 255 is an NAD(+) binding site. A substrate-binding site is contributed by tyrosine 256.

It belongs to the D-isomer specific 2-hydroxyacid dehydrogenase family. PdxB subfamily. As to quaternary structure, homodimer.

The protein localises to the cytoplasm. It carries out the reaction 4-phospho-D-erythronate + NAD(+) = (R)-3-hydroxy-2-oxo-4-phosphooxybutanoate + NADH + H(+). It functions in the pathway cofactor biosynthesis; pyridoxine 5'-phosphate biosynthesis; pyridoxine 5'-phosphate from D-erythrose 4-phosphate: step 2/5. Its function is as follows. Catalyzes the oxidation of erythronate-4-phosphate to 3-hydroxy-2-oxo-4-phosphonooxybutanoate. The polypeptide is Erythronate-4-phosphate dehydrogenase (Hahella chejuensis (strain KCTC 2396)).